Here is an 89-residue protein sequence, read N- to C-terminus: Small ribosomal subunit protein uS15 (89 aa).

Belongs to the universal ribosomal protein uS15 family. Part of the 30S ribosomal subunit. Forms a bridge to the 50S subunit in the 70S ribosome, contacting the 23S rRNA.

One of the primary rRNA binding proteins, it binds directly to 16S rRNA where it helps nucleate assembly of the platform of the 30S subunit by binding and bridging several RNA helices of the 16S rRNA. Its function is as follows. Forms an intersubunit bridge (bridge B4) with the 23S rRNA of the 50S subunit in the ribosome. In Clavibacter michiganensis subsp. michiganensis (strain NCPPB 382), this protein is Small ribosomal subunit protein uS15.